Reading from the N-terminus, the 213-residue chain is 3,4-dihydroxy-2-butanone 4-phosphate synthase (213 aa).

D-ribulose 5-phosphate contacts are provided by residues 37 to 38 (RE), Asp-42, 150 to 154 (RAGHT), and Glu-174. Residue Glu-38 coordinates Mg(2+). Residue His-153 participates in Mg(2+) binding.

This sequence belongs to the DHBP synthase family. Homodimer. The cofactor is Mg(2+). Mn(2+) is required as a cofactor.

The enzyme catalyses D-ribulose 5-phosphate = (2S)-2-hydroxy-3-oxobutyl phosphate + formate + H(+). Its pathway is cofactor biosynthesis; riboflavin biosynthesis; 2-hydroxy-3-oxobutyl phosphate from D-ribulose 5-phosphate: step 1/1. Catalyzes the conversion of D-ribulose 5-phosphate to formate and 3,4-dihydroxy-2-butanone 4-phosphate. This is 3,4-dihydroxy-2-butanone 4-phosphate synthase from Wigglesworthia glossinidia brevipalpis.